Reading from the N-terminus, the 311-residue chain is Porphobilinogen deaminase (311 aa).

Cys-242 carries the post-translational modification S-(dipyrrolylmethanemethyl)cysteine.

The protein belongs to the HMBS family. In terms of assembly, monomer. It depends on dipyrromethane as a cofactor.

It carries out the reaction 4 porphobilinogen + H2O = hydroxymethylbilane + 4 NH4(+). Its pathway is porphyrin-containing compound metabolism; protoporphyrin-IX biosynthesis; coproporphyrinogen-III from 5-aminolevulinate: step 2/4. In terms of biological role, tetrapolymerization of the monopyrrole PBG into the hydroxymethylbilane pre-uroporphyrinogen in several discrete steps. The chain is Porphobilinogen deaminase (hemC) from Vibrio cholerae serotype O1 (strain ATCC 39315 / El Tor Inaba N16961).